Reading from the N-terminus, the 483-residue chain is Rhamnulokinase (483 aa).

11-15 (ASSGR) lines the ATP pocket. Substrate-binding positions include glycine 79 and 234 to 236 (HDT). The active-site Proton acceptor is aspartate 235. Residue threonine 257 participates in ATP binding. Residue asparagine 294 coordinates substrate. Glutamine 302 is an ATP binding site. Cysteine 352 and cysteine 369 are joined by a disulfide. Residue glycine 401 participates in ATP binding.

This sequence belongs to the rhamnulokinase family. Mg(2+) serves as cofactor.

It catalyses the reaction L-rhamnulose + ATP = L-rhamnulose 1-phosphate + ADP + H(+). Its pathway is carbohydrate degradation; L-rhamnose degradation; glycerone phosphate from L-rhamnose: step 2/3. Involved in the catabolism of L-rhamnose (6-deoxy-L-mannose). Catalyzes the transfer of the gamma-phosphate group from ATP to the 1-hydroxyl group of L-rhamnulose to yield L-rhamnulose 1-phosphate. In Listeria monocytogenes serotype 4b (strain CLIP80459), this protein is Rhamnulokinase.